The chain runs to 521 residues: Small ribosomal subunit protein mL104 (rPPR9) (521 aa).

A mitochondrion-targeting transit peptide spans 1-59; it reads MPPSLPSLQLRRLLLRSFISSSSVNTLQSQPRIISSKPLFSPLPPSRSSIFSTFPSRFF. 8 PPR repeats span residues 174 to 204, 210 to 240, 244 to 278, 279 to 313, 321 to 355, 356 to 390, 393 to 427, and 428 to 462; these read GGKT…MEND, DKES…TANE, DENI…GFEI, GTKA…LLEM, NTET…GCQP, DAET…GYGE, NKKE…GCKP, and GIKT…GIAV. The segment covering 480-495 has biased composition (basic and acidic residues); it reads EVDSNVKKRETLPEKT. The disordered stretch occupies residues 480–499; sequence EVDSNVKKRETLPEKTARKK. The short motif at 486-503 is the Nuclear localization signal element; the sequence is KKRETLPEKTARKKKRLK.

It belongs to the PPR family. P subfamily. As to quaternary structure, interacts with NAP1;1 and TCP8. Able to bind mitochondrial RNA in vitro. Component of the mitochondrial ribosome small subunit. Expressed in root tips, lateral root primordia and leaf primordia. Highly detected in the mature pollen grains.

The protein resides in the mitochondrion matrix. It localises to the nucleus. RNA-binding protein that functions in both mitochondrion and nucleus. In mitochondrion, it is associated with polysomes and may play a role in translation. Required during embryogenesis. In nucleus, might be involved in the regulation of its own gene expression. In Arabidopsis thaliana (Mouse-ear cress), this protein is Small ribosomal subunit protein mL104 (rPPR9) (PNM1).